Consider the following 401-residue polypeptide: Imidazolonepropionase (401 aa).

His66 and His68 together coordinate Fe(3+). Zn(2+) contacts are provided by His66 and His68. Arg75, Tyr138, and His171 together coordinate 4-imidazolone-5-propanoate. Residue Tyr138 coordinates N-formimidoyl-L-glutamate. His236 contacts Fe(3+). Residue His236 coordinates Zn(2+). Gln239 contacts 4-imidazolone-5-propanoate. Asp311 is a binding site for Fe(3+). Asp311 contacts Zn(2+). Residues Asn313 and Gly315 each coordinate N-formimidoyl-L-glutamate. Residue Thr316 coordinates 4-imidazolone-5-propanoate.

The protein belongs to the metallo-dependent hydrolases superfamily. HutI family. It depends on Zn(2+) as a cofactor. The cofactor is Fe(3+).

The protein resides in the cytoplasm. It catalyses the reaction 4-imidazolone-5-propanoate + H2O = N-formimidoyl-L-glutamate. Its pathway is amino-acid degradation; L-histidine degradation into L-glutamate; N-formimidoyl-L-glutamate from L-histidine: step 3/3. Its function is as follows. Catalyzes the hydrolytic cleavage of the carbon-nitrogen bond in imidazolone-5-propanoate to yield N-formimidoyl-L-glutamate. It is the third step in the universal histidine degradation pathway. This is Imidazolonepropionase from Pseudomonas entomophila (strain L48).